Here is a 239-residue protein sequence, read N- to C-terminus: Fatty acid metabolism regulator protein (239 aa).

Residues 6–74 (QSPAGFAEEY…HGKPTKVNNF (69 aa)) enclose the HTH gntR-type domain. Residues 34–53 (ERELSELIGVTRTTLREVLQ) constitute a DNA-binding region (H-T-H motif).

In terms of assembly, homodimer.

The protein resides in the cytoplasm. Functionally, multifunctional regulator of fatty acid metabolism. This is Fatty acid metabolism regulator protein from Yersinia pseudotuberculosis serotype O:1b (strain IP 31758).